The chain runs to 87 residues: Retinal rod rhodopsin-sensitive cGMP 3',5'-cyclic phosphodiesterase subunit gamma (87 aa).

Residue M1 is modified to N-acetylmethionine. Basic and acidic residues predominate over residues 1-12; sequence MNLEPPKAEIRS. The tract at residues 1-55 is disordered; it reads MNLEPPKAEIRSATRVIGGPVTPRKGPPKFKQRQTRQFKSKPPKKGVQGFGDDIP. Over residues 26-44 the composition is skewed to basic residues; the sequence is GPPKFKQRQTRQFKSKPPK.

This sequence belongs to the rod/cone cGMP-PDE gamma subunit family. In terms of assembly, oligomer composed of two catalytic chains (alpha and beta), an inhibitory chain (gamma) and the delta chain.

The catalysed reaction is 3',5'-cyclic GMP + H2O = GMP + H(+). Participates in processes of transmission and amplification of the visual signal. cGMP-PDEs are the effector molecules in G-protein-mediated phototransduction in vertebrate rods and cones. This is Retinal rod rhodopsin-sensitive cGMP 3',5'-cyclic phosphodiesterase subunit gamma (PDE6G) from Canis lupus familiaris (Dog).